The following is a 297-amino-acid chain: Inactive beta selinene synthase (297 aa).

It belongs to the terpene synthase family. As to quaternary structure, monomer.

The protein resides in the cytoplasm. Its function is as follows. Inactive selinene synthase. This chain is Inactive beta selinene synthase, found in Zea mays (Maize).